The sequence spans 199 residues: Lysine exporter LysE (199 aa).

5 helical membrane-spanning segments follow: residues 6–26 (VVGFLACFTLIAAIGAQNAFV), 42–62 (LCTVSDIVLIAAGIAGFGALI), 68–88 (ALNVVKFGGAAFLIGYGLLAA), 144–164 (WLFGLGAVTASAVWFATLGFG), and 178–198 (WRILDGLIAVMMVALGISLTV).

The protein belongs to the LysE/ArgO transporter (TC 2.A.75) family.

The protein resides in the cell inner membrane. Catalyzes the efflux of L-lysine. The protein is Lysine exporter LysE of Mycobacterium bovis (strain ATCC BAA-935 / AF2122/97).